Reading from the N-terminus, the 123-residue chain is Large ribosomal subunit protein bL17 (123 aa).

It belongs to the bacterial ribosomal protein bL17 family. As to quaternary structure, part of the 50S ribosomal subunit. Contacts protein L32.

This Borrelia garinii subsp. bavariensis (strain ATCC BAA-2496 / DSM 23469 / PBi) (Borreliella bavariensis) protein is Large ribosomal subunit protein bL17.